Reading from the N-terminus, the 140-residue chain is MAQSSGHVSYVAVTVPIAIVMTVLCLFLANAVTYARRPTTYIVGGDDGWDPVVPMDTWARGKTFYAGDILEFKYDYQRFNLIVVNRTGYETCEANVGAIEYSSGDDKIQLNYGYNYFIGTYTPEDCTTGLKMAIKALAPR.

Residues 1 to 28 form the signal peptide; sequence MAQSSGHVSYVAVTVPIAIVMTVLCLFL. One can recognise a Phytocyanin domain in the interval 39–138; the sequence is TTYIVGGDDG…GLKMAIKALA (100 aa). The N-linked (GlcNAc...) asparagine glycan is linked to Asn-85. A disulfide bridge connects residues Cys-92 and Cys-126.

Belongs to the early nodulin-like (ENODL) family.

Its function is as follows. May act as a carbohydrate transporter. This chain is Early nodulin-like protein 22, found in Arabidopsis thaliana (Mouse-ear cress).